The following is a 412-amino-acid chain: Gamma-glutamyl phosphate reductase (412 aa).

Belongs to the gamma-glutamyl phosphate reductase family.

It is found in the cytoplasm. The enzyme catalyses L-glutamate 5-semialdehyde + phosphate + NADP(+) = L-glutamyl 5-phosphate + NADPH + H(+). Its pathway is amino-acid biosynthesis; L-proline biosynthesis; L-glutamate 5-semialdehyde from L-glutamate: step 2/2. Its function is as follows. Catalyzes the NADPH-dependent reduction of L-glutamate 5-phosphate into L-glutamate 5-semialdehyde and phosphate. The product spontaneously undergoes cyclization to form 1-pyrroline-5-carboxylate. In Bartonella bacilliformis (strain ATCC 35685 / KC583 / Herrer 020/F12,63), this protein is Gamma-glutamyl phosphate reductase.